The primary structure comprises 141 residues: Protein MGF 100-2L (141 aa).

Belongs to the asfivirus MGF 100 family.

In terms of biological role, plays a role in virus cell tropism, and may be required for efficient virus replication in macrophages. This African swine fever virus (isolate Tick/Malawi/Lil 20-1/1983) (ASFV) protein is Protein MGF 100-2L.